Reading from the N-terminus, the 41-residue chain is uncharacterized protein (41 aa).

The N-terminal stretch at 1–23 is a signal peptide; that stretch reads MNFLMRAIFSLLLLFTLSIPVIS.

This is an uncharacterized protein from Escherichia coli (strain K12).